A 1663-amino-acid chain; its full sequence is Complement C3 (1663 aa).

Residues M1–G22 form the signal peptide. 2 positions are modified to phosphoserine; by FAM20C: S38 and S70. The N-linked (GlcNAc...) asparagine glycan is linked to N85. S297 and S303 each carry phosphoserine; by FAM20C. 13 cysteine pairs are disulfide-bonded: C559-C816, C627-C662, C693-C720, C694-C727, C707-C728, C873-C1513, C1101-C1158, C1358-C1489, C1389-C1458, C1506-C1511, C1518-C1590, C1537-C1661, and C1637-C1646. S672 bears the Phosphoserine; by FAM20C mark. An Anaphylatoxin-like domain is found at C693 to C728. The N-linked (GlcNAc...) asparagine glycan is linked to N939. The tract at residues R954–D973 is disordered. The residue at position 968 (S968) is a Phosphoserine; by FAM20C. A cross-link (isoglutamyl cysteine thioester (Cys-Gln)) is located at residues C1010–Q1013. Residue S1321 is modified to Phosphoserine; by FAM20C. One can recognise an NTR domain in the interval C1518–C1661. S1573 bears the Phosphoserine; by FAM20C mark. N1617 carries an N-linked (GlcNAc...) asparagine glycan. The tract at residues E1634 to F1659 is interaction with CFP/properdin.

In terms of assembly, in absence of complement activation, the C3 precursor is first processed by the removal of 4 Arg residues, forming two chains, beta and alpha, linked by a disulfide bond. Complement C3b is composed of complement C3b and complement C3 beta chains that are associated via disulfide bonds. Non-enzymatic component of the C5 convertase, also named C4bC2bC3b, composed of the serine protease complement C2b (C2), complement C3b, as well as complement C4b (C4). Non-enzymatic component of the C5 convertase of the alternative complement pathways composed of the serine protease complement CFB and complement C3b. Interacts with CFP; interaction takes place together with CFB in the alternative complement system and allows the complex to become active. Interacts with CR1 (via Sushi 8 and Sushi 9 domains). Interacts with CFH. As to quaternary structure, interacts with CFH. Interacts with CR2. In terms of assembly, during pregnancy, C3dg exists as a complex (probably a 2:2:2 heterohexamer) with AGT and the proform of PRG2. Interacts with CR2 (via the N-terminal Sushi domains 1 and 2). (Microbial infection) C3b interacts with herpes simplex virus 1 (HHV-1) and herpes simplex virus 2 (HHV-2) envelope glycoprotein C; this interaction inhibits the activation of the complement system. As to quaternary structure, (Microbial infection) Interacts with Staphylococcus aureus immunoglobulin-binding protein Sbi; this interaction prevents the association between C3dg and CR2. In terms of assembly, (Microbial infection) Interacts with Staphylococcus aureus protein Fib. In terms of processing, C3 precursor is first processed by the removal of 4 Arg residues, forming two chains, beta and alpha, linked by a disulfide bond. During activation of the complement systems, the alpha chain is cleaved into C3a and C3b by the C3 convertase: C3b stays linked to the beta chain, while C3a is released in the plasma. The alpha chain is cleaved by the serine protease complement C2b component of the C3 convertase to generate C3a and C3b following activation by the classical, lectin and GZMK complement systems. The alpha chain is cleaved by CFB component of the C3 convertase to generate C3a and C3b following activation by the alternative complement system. C3a is further processed by carboxypeptidases to release the C-terminal arginine residue generating the acylation stimulating protein (ASP). Levels of ASP are increased in adipocytes in the postprandial period and by insulin and dietary chylomicrons. Post-translationally, complement C3b is rapidly split in two positions by factor I (CFI) and a cofactor (CFH) to form iC3b (inactivated C3b) and C3f which is released. CFI and CFH catalyze proteolytic degradation of already-deposited complement C3b. Then iC3b is slowly cleaved (possibly by CFI) to form C3c (beta chain + alpha' chain fragment 1 + alpha' chain fragment 2), C3dg and C3f. Other proteases produce other fragments such as C3d or C3g. In terms of processing, upon activation, the internal thioester bond reacts with carbohydrate antigens on the target surface to form amide or ester bonds, leading to covalent association with the surface of pathogens. Complement C3b interacts with complement C4b via a thioester linkage. Post-translationally, phosphorylated by FAM20C in the extracellular medium. In terms of processing, (Microbial infection) C3 is cleaved by Staphylococcus aureus aureolysin; this cleavage renders C3a and C3b inactive. C3b is rapidly degraded by host factors CFH and CFI preventing its deposition on the bacterial surface while C3a is further inactivated by aureolysin. (Microbial infection) Complement C3 beta chain is cleaved and inactivated by S.pyogenes SpeB. Post-translationally, (Microbial infection) Cleaved by N.meningitidis NalP between Leu-744 and Gly-745, generating a slightly shorter C3 alpha form and a slightly longer C3 beta form. The C3b-like fragment is degraded in the presence of the complement regulators CFH and CFI, preventing its deposition on the bacterial surface. Plasma. In terms of tissue distribution, produced in adipocytes and released into the plasma during both the fasting and postprandial periods.

The protein localises to the secreted. It is found in the cell surface. With respect to regulation, complement activation is inhibited by VSIG4. In terms of biological role, precursor of non-enzymatic components of the classical, alternative, lectin and GZMK complement pathways, which consist in a cascade of proteins that leads to phagocytosis and breakdown of pathogens and signaling that strengthens the adaptive immune system. Non-enzymatic component of C5 convertase. Generated following cleavage by C3 convertase, it covalently attaches to the surface of pathogens, where it acts as an opsonin that marks the surface of antigens for removal. Complement C3b binds covalently via its reactive thioester, to cell surface carbohydrates or immune aggregates. Together with complement C4b, it then recruits the serine protease complement C2b to form the C5 convertase, which cleaves and activate C5, the next component of the complement pathways. In the alternative complement pathway, recruits the serine protease CFB to form the C5 convertase that cleaves and activates C5. Functionally, mediator of local inflammatory process released following cleavage by C3 convertase. Acts by binding to its receptor, C3AR1, activating G protein-coupled receptor signaling, promoting the phosphorylation, ARRB2-mediated internalization and endocytosis of C3AR1. C3a anaphylatoxin stimulates the activation of immune cells such as mast cells and basophilic leukocytes to release inflammation agents, such as cytokines, chemokines and histamine, which promote inflammation development. Also acts as potent chemoattractant for the migration of macrophages and neutrophils to the inflamed tissues, resulting in neutralization of the inflammatory triggers by multiple ways, such as phagocytosis and generation of reactive oxidants. Its function is as follows. Adipogenic hormone that stimulates triglyceride synthesis and glucose transport in adipocytes, regulating fat storage and playing a role in postprandial triglyceride clearance. Appears to stimulate triglyceride synthesis via activation of the PLC, MAPK and AKT signaling pathways. Acts by binding to its receptor, C5AR2, activating G protein-coupled receptor signaling, promoting the phosphorylation, ARRB2-mediated internalization and endocytosis of C5AR2. In terms of biological role, acts as a chemoattractant for neutrophils in chronic inflammation. The polypeptide is Complement C3 (Homo sapiens (Human)).